We begin with the raw amino-acid sequence, 552 residues long: Scavenger receptor class B member 1 (552 aa).

The Cytoplasmic segment spans residues 1–11; it reads MGCSAKARWAA. The helical transmembrane segment at 12–32 threads the bilayer; that stretch reads GALGVAGLLCAVLGAVMIVMV. Topologically, residues 33-443 are extracellular; the sequence is PSLIKQQVLK…LVLMPKVMHY (411 aa). Asn102, Asn108, Asn173, Asn212, Asn227, Asn255, Asn310, Asn330, and Asn383 each carry an N-linked (GlcNAc...) asparagine glycan. Cys251 and Cys384 are joined by a disulfide. Phosphoserine occurs at positions 393 and 458. A helical transmembrane segment spans residues 444-464; that stretch reads AQYVLLALGCVLLLVPVICQI. Cys462 carries the S-palmitoyl cysteine lipid modification. Residues 465-552 lie on the Cytoplasmic side of the membrane; it reads RSQVGAGQRA…GPSLGGGTGS (88 aa). The residue at position 493 (Thr493) is a Phosphoserine.

This sequence belongs to the CD36 family. In terms of assembly, the C-terminal region binds to PDZK1. (Microbial infection) Interacts with hepatitis C virus E1:E2 glycoproteins. Post-translationally, N-glycosylated. The six cysteines of the extracellular domain are all involved in intramolecular disulfide bonds. As to expression, widely expressed.

Its subcellular location is the cell membrane. The protein resides in the membrane. It localises to the caveola. Functionally, receptor for different ligands such as phospholipids, cholesterol ester, lipoproteins, phosphatidylserine and apoptotic cells. Receptor for HDL, mediating selective uptake of cholesteryl ether and HDL-dependent cholesterol efflux. Also facilitates the flux of free and esterified cholesterol between the cell surface and apoB-containing lipoproteins and modified lipoproteins, although less efficiently than HDL. May be involved in the phagocytosis of apoptotic cells, via its phosphatidylserine binding activity. Its function is as follows. (Microbial infection) Acts as a receptor for hepatitis C virus in hepatocytes and appears to facilitate its cell entry. Binding between SCARB1 and the hepatitis C virus glycoprotein E2 is independent of the genotype of the viral isolate. (Microbial infection) Mediates uptake of M.fortuitum, E.coli and S.aureus. In terms of biological role, (Microbial infection) Facilitates the entry of human coronavirus SARS-CoV-2 by acting as an entry cofactor through HDL binding. This Homo sapiens (Human) protein is Scavenger receptor class B member 1 (SCARB1).